The sequence spans 391 residues: Phosphoglycerate kinase (391 aa).

Substrate-binding positions include 21–23 (DLN), Arg36, 59–62 (HLGR), Arg113, and Arg146. ATP is bound by residues Lys197, Glu319, and 345 to 348 (GGDT).

This sequence belongs to the phosphoglycerate kinase family. As to quaternary structure, monomer.

It localises to the cytoplasm. It carries out the reaction (2R)-3-phosphoglycerate + ATP = (2R)-3-phospho-glyceroyl phosphate + ADP. The protein operates within carbohydrate degradation; glycolysis; pyruvate from D-glyceraldehyde 3-phosphate: step 2/5. The polypeptide is Phosphoglycerate kinase (Colwellia psychrerythraea (strain 34H / ATCC BAA-681) (Vibrio psychroerythus)).